The following is a 416-amino-acid chain: MAGFVPLLLLLLPAGPTWGSKEKCLTKMYTTSGECCKACNLGEGVVQPCGVNQTVCEPCLDSVTYSDTVSATEPCKPCTQCVGLHSMSAPCVESDDAVCRCAYGYFQDELSGSCKECSICEVGFGLMFPCRDSQDTVCEECPEGTFSDEANFVDPCLPCTICEENEVMVKECTATSDAECRDLHPRWTTHTPSLAGSDSPEPITRDPFNTEGMATTLADIVTTVMGSSQPVVSRGTADNLIPVYCSILAAVVVGLVAYIAFKRWNSCKQNKQGANNRPVNQTPSPEGEKLHSDSGISVDSQSLHDQQPPNQSTQGPAPKGDGSLYASLPPSKQEEVEKLLSSSAEETWRQLAGELGYKEDLIDCFTREESPARALLADWSAKETATLDALLVALRKIQRGDIAESLYSESTATSPV.

The signal sequence occupies residues 1 to 19; it reads MAGFVPLLLLLLPAGPTWG. TNFR-Cys repeat units lie at residues 23-57, 58-99, 100-138, and 140-180; these read KCLTKMYTTSGECCKACNLGEGVVQPCGVNQTVCE, PCLD…DAVC, RCAYGYFQDELSGSCKECSICEVGFGLMFPCRDSQDTVC, and ECPE…DAEC. 12 disulfides stabilise this stretch: Cys-24-Cys-35, Cys-36-Cys-49, Cys-39-Cys-56, Cys-59-Cys-75, Cys-78-Cys-91, Cys-81-Cys-99, Cys-101-Cys-114, Cys-117-Cys-130, Cys-120-Cys-138, Cys-141-Cys-156, Cys-159-Cys-172, and Cys-162-Cys-180. Over 29 to 239 the chain is Extracellular; the sequence is YTTSGECCKA…PVVSRGTADN (211 aa). Asn-52 carries N-linked (GlcNAc...) asparagine glycosylation. The helical transmembrane segment at 240–261 threads the bilayer; the sequence is LIPVYCSILAAVVVGLVAYIAF. At 262 to 416 the chain is on the cytoplasmic side; the sequence is KRWNSCKQNK…YSESTATSPV (155 aa). 2 stretches are compositionally biased toward polar residues: residues 270–284 and 294–315; these read NKQGANNRPVNQTPS and SGISVDSQSLHDQQPPNQSTQG. Residues 270 to 328 form a disordered region; it reads NKQGANNRPVNQTPSPEGEKLHSDSGISVDSQSLHDQQPPNQSTQGPAPKGDGSLYASL. Positions 333-410 constitute a Death domain; that stretch reads QEEVEKLLSS…DIAESLYSES (78 aa).

In terms of assembly, homodimer; disulfide-linked. Heterodimer with SORCS2. The extracellular domains of the heterodimer bind NGF. Post-translationally, N- and O-glycosylated. In terms of processing, phosphorylated on serine residues. Detected in embryonic dorsal root ganglion and retina.

The protein resides in the cell membrane. It is found in the perikaryon. Its subcellular location is the cell projection. It localises to the growth cone. The protein localises to the dendritic spine. Low affinity receptor which can bind to NGF, BDNF, NTF3, and NTF4. Forms a heterodimeric receptor with SORCS2 that binds the precursor forms of NGF, BDNF and NTF3 with high affinity, and has much lower affinity for mature NGF and BDNF. Plays an important role in differentiation and survival of specific neuronal populations during development. Can mediate cell survival as well as cell death of neural cells. Plays a role in the inactivation of RHOA. Necessary for the circadian oscillation of clock genes in the suprachiasmatic nucleus (SCmgetaN) of the brain and in liver and of the genes involved in glucose and lipid metabolism in the liver. This chain is Tumor necrosis factor receptor superfamily member 16 (NGFR), found in Gallus gallus (Chicken).